Here is a 306-residue protein sequence, read N- to C-terminus: UDP-N-acetylenolpyruvoylglucosamine reductase (306 aa).

An FAD-binding PCMH-type domain is found at 34–198 (VGGPADLLIT…LEVTFKLHNS (165 aa)). Residue arginine 177 is part of the active site. Catalysis depends on serine 227, which acts as the Proton donor. Glutamate 297 is a catalytic residue.

The protein belongs to the MurB family. The cofactor is FAD.

The protein localises to the cytoplasm. The catalysed reaction is UDP-N-acetyl-alpha-D-muramate + NADP(+) = UDP-N-acetyl-3-O-(1-carboxyvinyl)-alpha-D-glucosamine + NADPH + H(+). Its pathway is cell wall biogenesis; peptidoglycan biosynthesis. Cell wall formation. The chain is UDP-N-acetylenolpyruvoylglucosamine reductase from Clostridium botulinum (strain ATCC 19397 / Type A).